Here is a 197-residue protein sequence, read N- to C-terminus: MTSLYLASGSPRRQELLAQLGVTFERIVTGIEEQRQPQESAQQYVVRLAREKAQAGVAQTAQDLPVLGADIIVILNGEVLEKPRDAEHAAQMLRKLSGQTHQVMTAVALADSQHILDCLVVTDVTFRTLTDEDIAGYVASGEPLDKAGAYGIQGLGGCFVRKINGSYHAVVGLPLVETYELLSNFNALREKRDKHDG.

The active-site Proton acceptor is the Asp70.

It belongs to the Maf family. Requires a divalent metal cation as cofactor.

Its subcellular location is the cytoplasm. It catalyses the reaction a ribonucleoside 5'-triphosphate + H2O = a ribonucleoside 5'-phosphate + diphosphate + H(+). It carries out the reaction a 2'-deoxyribonucleoside 5'-triphosphate + H2O = a 2'-deoxyribonucleoside 5'-phosphate + diphosphate + H(+). Its function is as follows. Nucleoside triphosphate pyrophosphatase. May have a dual role in cell division arrest and in preventing the incorporation of modified nucleotides into cellular nucleic acids. The chain is Nucleoside triphosphate pyrophosphatase (yhdE) from Shigella flexneri.